The primary structure comprises 366 residues: Alanine racemase (366 aa).

The active-site Proton acceptor; specific for D-alanine is K35. K35 is modified (N6-(pyridoxal phosphate)lysine). R130 is a substrate binding site. Catalysis depends on Y254, which acts as the Proton acceptor; specific for L-alanine. M302 is a binding site for substrate.

The protein belongs to the alanine racemase family. The cofactor is pyridoxal 5'-phosphate.

It catalyses the reaction L-alanine = D-alanine. Its pathway is amino-acid biosynthesis; D-alanine biosynthesis; D-alanine from L-alanine: step 1/1. In terms of biological role, catalyzes the interconversion of L-alanine and D-alanine. May also act on other amino acids. This chain is Alanine racemase (alr), found in Variovorax paradoxus (strain S110).